The chain runs to 367 residues: Aldo-keto reductase AMT2 (367 aa).

Asp-76 serves as a coordination point for NADP(+). Tyr-81 functions as the Proton donor in the catalytic mechanism. His-173 lines the substrate pocket. Residues 203-204 (SS), Gln-229, 258-268 (GPLAAGKLARP), and 330-338 (SSVERMDEV) each bind NADP(+). The segment at 346 to 367 (LSDEEESRLEDPYKAQPPQGHS) is disordered.

The protein belongs to the aldo/keto reductase family.

Its pathway is mycotoxin biosynthesis. In terms of biological role, aldo-keto reductase; part of the gene clusters that mediate the biosynthesis of AM-toxins, host-selective toxins (HSTs) causing Alternaria blotch on apple, a worldwide distributed disease. AM-toxins are cyclic depsipeptides containing the 3 residues 2-hydroxy-isovaleric acid (2-HIV), dehydroalanine, L-alanine which are common for all 3 AM-toxins I to III. The fourth precursor is L-alpha-amino-methoxyphenyl-valeric acid (L-Amv) for AM-toxin I, L-alpha-amino-phenyl-valeric acid (L-Apv) for AM-toxin II, and L-alpha-amino-hydroxyphenyl-valeric acid (L-Ahv) for AM-toxin III. AM-toxins have two target sites for affecting susceptible apple cells; they cause invagination of the plasma membrane and electrolyte loss and chloroplast disorganization. The non-ribosomal peptide synthetase AMT1 contains 4 catalytic modules and is responsible for activation of each residue in AM-toxin. The aldo-keto reductase AMT2 catalyzes the conversion of 2-keto-isovaleric acid (2-KIV) to 2-hydroxy-isovaleric acid (2-HIV), one of the precursor residues incorporated by AMT1 during AM-toxin biosynthesis, by reduction of its ketone to an alcohol. The cytochrome P450 monooxygenase AMT3 and the thioesterase AMT4 are also important for AM-toxin production, but their exact function within the AM-toxin biosynthesis are not known yet. Up to 21 proteins (including AMT1 to AMT4) are predicted to be involved in AM-toxin biosynthesis since their expression ishighly up-regulated in AM-toxin-producing cultures. This chain is Aldo-keto reductase AMT2, found in Alternaria alternata (Alternaria rot fungus).